Consider the following 548-residue polypeptide: Methyl-accepting chemotaxis protein HlyB (548 aa).

At 1 to 10 (MIINKFSLKW) the chain is on the cytoplasmic side. The chain crosses the membrane as a helical span at residues 11-31 (MLAIAVAIPAIALLFVAFTSL). The Periplasmic portion of the chain corresponds to 32–199 (NTMSVMQAQS…SFEAGRTKQM (168 aa)). The chain crosses the membrane as a helical span at residues 200–220 (VIIAAGLIISFITSLVIITNL). One can recognise an HAMP domain in the interval 218–271 (TNLRSRVAYLKDRMSSAAANLSLRTRLELDGNDELCDIGKSFNAFIDKVHHSIE). The Cytoplasmic segment spans residues 221–548 (RSRVAYLKDR…LDKLVGSFEL (328 aa)). The Methyl-accepting transducer domain maps to 276–512 (NSKELATMAS…DINRNVEDIN (237 aa)).

This sequence belongs to the methyl-accepting chemotaxis (MCP) protein family.

The protein localises to the cell inner membrane. In terms of biological role, chemotactic-signal transducers respond to changes in the concentration of attractants and repellents in the environment, transduce a signal from the outside to the inside of the cell, and facilitate sensory adaptation through the variation of the level of methylation. This chain is Methyl-accepting chemotaxis protein HlyB (hlyB), found in Vibrio cholerae serotype O1 (strain ATCC 39315 / El Tor Inaba N16961).